The chain runs to 292 residues: Probable ABC transporter permease protein PH1215 (292 aa).

The next 6 membrane-spanning stretches (helical) occupy residues I10 to V30, L72 to L92, I106 to Y126, I160 to I180, L215 to L235, and F261 to P281. The 217-residue stretch at L68–Y284 folds into the ABC transmembrane type-1 domain.

It belongs to the binding-protein-dependent transport system permease family. MalFG subfamily.

Its subcellular location is the cell membrane. In terms of biological role, probably part of a binding-protein-dependent transport system PH1214/15/16. Probably responsible for the translocation of the substrate across the membrane. The protein is Probable ABC transporter permease protein PH1215 of Pyrococcus horikoshii (strain ATCC 700860 / DSM 12428 / JCM 9974 / NBRC 100139 / OT-3).